Reading from the N-terminus, the 359-residue chain is RNA-binding protein 4B (359 aa).

RRM domains are found at residues 2–72 (VKLF…ASKN) and 78–148 (TKLH…LSTS). The CCHC-type zinc-finger motif lies at 160-177 (SGCYRCGKEGHWSKECPV). The interaction with TNPO3 stretch occupies residues 196-359 (AVRTPYTMGY…YVDRARYSAF (164 aa)).

Interacts with TNPO3, which may mediate nuclear import of the protein. Expressed in liver and kidney (at protein level). Ubiquitously expressed.

It localises to the nucleus. Its subcellular location is the nucleolus. Required for the translational activation of PER1 mRNA in response to circadian clock. Binds directly to the 3'-UTR of the PER1 mRNA. This is RNA-binding protein 4B (RBM4B) from Homo sapiens (Human).